We begin with the raw amino-acid sequence, 355 residues long: Peptide chain release factor 1 (355 aa).

N5-methylglutamine is present on glutamine 233.

The protein belongs to the prokaryotic/mitochondrial release factor family. Post-translationally, methylated by PrmC. Methylation increases the termination efficiency of RF1.

It localises to the cytoplasm. In terms of biological role, peptide chain release factor 1 directs the termination of translation in response to the peptide chain termination codons UAG and UAA. The sequence is that of Peptide chain release factor 1 from Rickettsia typhi (strain ATCC VR-144 / Wilmington).